Reading from the N-terminus, the 253-residue chain is 4-hydroxy-tetrahydrodipicolinate reductase (253 aa).

An NAD(+)-binding site is contributed by 16–21; that stretch reads GDTGRM. Arg-44 contacts NADP(+). NAD(+) contacts are provided by residues 85–87 and 111–114; these read GTT and CANT. His-144 acts as the Proton donor/acceptor in catalysis. Residue His-145 coordinates (S)-2,3,4,5-tetrahydrodipicolinate. Residue Lys-148 is the Proton donor of the active site. 154 to 155 is a (S)-2,3,4,5-tetrahydrodipicolinate binding site; the sequence is GT.

Belongs to the DapB family.

It is found in the cytoplasm. It carries out the reaction (S)-2,3,4,5-tetrahydrodipicolinate + NAD(+) + H2O = (2S,4S)-4-hydroxy-2,3,4,5-tetrahydrodipicolinate + NADH + H(+). The enzyme catalyses (S)-2,3,4,5-tetrahydrodipicolinate + NADP(+) + H2O = (2S,4S)-4-hydroxy-2,3,4,5-tetrahydrodipicolinate + NADPH + H(+). Its pathway is amino-acid biosynthesis; L-lysine biosynthesis via DAP pathway; (S)-tetrahydrodipicolinate from L-aspartate: step 4/4. Its function is as follows. Catalyzes the conversion of 4-hydroxy-tetrahydrodipicolinate (HTPA) to tetrahydrodipicolinate. The chain is 4-hydroxy-tetrahydrodipicolinate reductase from Chlamydia trachomatis serovar A (strain ATCC VR-571B / DSM 19440 / HAR-13).